Reading from the N-terminus, the 317-residue chain is tRNA dimethylallyltransferase (317 aa).

19 to 26 (GPTASGKS) is an ATP binding site. 21–26 (TASGKS) is a substrate binding site. The interval 44-47 (DSMQ) is interaction with substrate tRNA.

Belongs to the IPP transferase family. Monomer. Mg(2+) serves as cofactor.

It catalyses the reaction adenosine(37) in tRNA + dimethylallyl diphosphate = N(6)-dimethylallyladenosine(37) in tRNA + diphosphate. Catalyzes the transfer of a dimethylallyl group onto the adenine at position 37 in tRNAs that read codons beginning with uridine, leading to the formation of N6-(dimethylallyl)adenosine (i(6)A). The chain is tRNA dimethylallyltransferase from Methylorubrum populi (strain ATCC BAA-705 / NCIMB 13946 / BJ001) (Methylobacterium populi).